The sequence spans 106 residues: ATP-dependent Clp protease adapter protein ClpS (106 aa).

This sequence belongs to the ClpS family. Binds to the N-terminal domain of the chaperone ClpA.

Its function is as follows. Involved in the modulation of the specificity of the ClpAP-mediated ATP-dependent protein degradation. This chain is ATP-dependent Clp protease adapter protein ClpS, found in Vibrio campbellii (strain ATCC BAA-1116).